Reading from the N-terminus, the 939-residue chain is Valine--tRNA ligase (939 aa).

Positions 47–57 match the 'HIGH' region motif; sequence PNVTGILHMGH. The short motif at 563 to 567 is the 'KMSKS' region element; it reads KLSKS. Lys566 contributes to the ATP binding site. A coiled-coil region spans residues 874–939; the sequence is EHLAKERVRL…QSILDKLASL (66 aa).

Belongs to the class-I aminoacyl-tRNA synthetase family. ValS type 1 subfamily. In terms of assembly, monomer.

It localises to the cytoplasm. It catalyses the reaction tRNA(Val) + L-valine + ATP = L-valyl-tRNA(Val) + AMP + diphosphate. Its function is as follows. Catalyzes the attachment of valine to tRNA(Val). As ValRS can inadvertently accommodate and process structurally similar amino acids such as threonine, to avoid such errors, it has a 'posttransfer' editing activity that hydrolyzes mischarged Thr-tRNA(Val) in a tRNA-dependent manner. In Chlamydia trachomatis serovar L2 (strain ATCC VR-902B / DSM 19102 / 434/Bu), this protein is Valine--tRNA ligase.